The sequence spans 71 residues: Metallothionein-like protein 1 (71 aa).

Belongs to the metallothionein superfamily. Type 15 family.

Its function is as follows. Metallothioneins have a high content of cysteine residues that bind various heavy metals. The sequence is that of Metallothionein-like protein 1 (MT1) from Casuarina glauca (Swamp oak).